We begin with the raw amino-acid sequence, 85 residues long: Large ribosomal subunit protein bL27 (85 aa).

The segment at 1-22 (MAHKKAGGSTNNGRDSESKRLG) is disordered.

Belongs to the bacterial ribosomal protein bL27 family.

This Vibrio atlanticus (strain LGP32) (Vibrio splendidus (strain Mel32)) protein is Large ribosomal subunit protein bL27.